Reading from the N-terminus, the 93-residue chain is Co-chaperonin GroES (93 aa).

The protein belongs to the GroES chaperonin family. Heptamer of 7 subunits arranged in a ring. Interacts with the chaperonin GroEL.

Its subcellular location is the cytoplasm. In terms of biological role, together with the chaperonin GroEL, plays an essential role in assisting protein folding. The GroEL-GroES system forms a nano-cage that allows encapsulation of the non-native substrate proteins and provides a physical environment optimized to promote and accelerate protein folding. GroES binds to the apical surface of the GroEL ring, thereby capping the opening of the GroEL channel. This is Co-chaperonin GroES from Streptococcus anginosus.